Consider the following 690-residue polypeptide: Choline transporter-like 1 (690 aa).

The helical transmembrane segment at 23–43 (IFWLVLYVVFWIALIVIAVFS) threads the bilayer. Asparagine 134 carries an N-linked (GlcNAc...) asparagine glycan. 4 helical membrane passes run 203–223 (LYKAWPTIVLICALSLVFSIV), 237–259 (WLICIIVVVASVGITGVLWWSYY), 282–302 (ATIYVLAIAATCIMIILLVVI), and 334–354 (LLAFLALSVFLAFWVVVVVCL). The N-linked (GlcNAc...) asparagine glycan is linked to asparagine 391. A run of 4 helical transmembrane segments spans residues 415-435 (IYIIGLIWTSEFIFACQQLAI), 464-484 (LGSVAKGSLIITIFKIPRLIL), 565-585 (FVLFLGKLAVASICGLISILL), and 594-614 (FYMAPVIIITVFAFFIAHIIL).

The protein belongs to the CTL (choline transporter-like) family.

It localises to the membrane. The chain is Choline transporter-like 1 from Anopheles gambiae (African malaria mosquito).